We begin with the raw amino-acid sequence, 170 residues long: ATP synthase subunit b (170 aa).

The chain crosses the membrane as a helical span at residues isoleucine 22–glycine 41. Positions alanine 72–arginine 98 are disordered.

This sequence belongs to the ATPase B chain family. In terms of assembly, F-type ATPases have 2 components, F(1) - the catalytic core - and F(0) - the membrane proton channel. F(1) has five subunits: alpha(3), beta(3), gamma(1), delta(1), epsilon(1). F(0) has four main subunits: a(1), b(1), b'(1) and c(10-14). The alpha and beta chains form an alternating ring which encloses part of the gamma chain. F(1) is attached to F(0) by a central stalk formed by the gamma and epsilon chains, while a peripheral stalk is formed by the delta, b and b' chains.

It is found in the cellular thylakoid membrane. Functionally, f(1)F(0) ATP synthase produces ATP from ADP in the presence of a proton or sodium gradient. F-type ATPases consist of two structural domains, F(1) containing the extramembraneous catalytic core and F(0) containing the membrane proton channel, linked together by a central stalk and a peripheral stalk. During catalysis, ATP synthesis in the catalytic domain of F(1) is coupled via a rotary mechanism of the central stalk subunits to proton translocation. Component of the F(0) channel, it forms part of the peripheral stalk, linking F(1) to F(0). The sequence is that of ATP synthase subunit b from Prochlorococcus marinus (strain MIT 9301).